The following is a 564-amino-acid chain: Dihydroxy-acid dehydratase (564 aa).

A [2Fe-2S] cluster-binding site is contributed by cysteine 55. Residue aspartate 87 coordinates Mg(2+). Cysteine 128 is a [2Fe-2S] cluster binding site. Aspartate 129 and lysine 130 together coordinate Mg(2+). Lysine 130 carries the N6-carboxylysine modification. Cysteine 200 is a binding site for [2Fe-2S] cluster. Glutamate 452 contributes to the Mg(2+) binding site. The Proton acceptor role is filled by serine 478.

Belongs to the IlvD/Edd family. In terms of assembly, homodimer. Requires [2Fe-2S] cluster as cofactor. Mg(2+) is required as a cofactor.

The catalysed reaction is (2R)-2,3-dihydroxy-3-methylbutanoate = 3-methyl-2-oxobutanoate + H2O. It catalyses the reaction (2R,3R)-2,3-dihydroxy-3-methylpentanoate = (S)-3-methyl-2-oxopentanoate + H2O. Its pathway is amino-acid biosynthesis; L-isoleucine biosynthesis; L-isoleucine from 2-oxobutanoate: step 3/4. The protein operates within amino-acid biosynthesis; L-valine biosynthesis; L-valine from pyruvate: step 3/4. In terms of biological role, functions in the biosynthesis of branched-chain amino acids. Catalyzes the dehydration of (2R,3R)-2,3-dihydroxy-3-methylpentanoate (2,3-dihydroxy-3-methylvalerate) into 2-oxo-3-methylpentanoate (2-oxo-3-methylvalerate) and of (2R)-2,3-dihydroxy-3-methylbutanoate (2,3-dihydroxyisovalerate) into 2-oxo-3-methylbutanoate (2-oxoisovalerate), the penultimate precursor to L-isoleucine and L-valine, respectively. This Albidiferax ferrireducens (strain ATCC BAA-621 / DSM 15236 / T118) (Rhodoferax ferrireducens) protein is Dihydroxy-acid dehydratase.